Reading from the N-terminus, the 61-residue chain is Small ribosomal subunit protein uS14B (61 aa).

Zn(2+) is bound by residues Cys-24, Cys-27, Cys-40, and Cys-43.

It belongs to the universal ribosomal protein uS14 family. Zinc-binding uS14 subfamily. In terms of assembly, part of the 30S ribosomal subunit. Contacts proteins S3 and S10. Zn(2+) is required as a cofactor.

In terms of biological role, binds 16S rRNA, required for the assembly of 30S particles and may also be responsible for determining the conformation of the 16S rRNA at the A site. The polypeptide is Small ribosomal subunit protein uS14B (Limosilactobacillus reuteri (strain DSM 20016) (Lactobacillus reuteri)).